Here is a 152-residue protein sequence, read N- to C-terminus: uncharacterized protein (152 aa).

At Met1–Gln5 the chain is on the cytoplasmic side. A helical transmembrane segment spans residues Ile6–Phe26. Topologically, residues Thr27 to Arg38 are extracellular. Residues Gly39–Val59 form a helical membrane-spanning segment. Residues Glu60–Asn65 are Cytoplasmic-facing. Residues Phe66 to Tyr86 form a helical membrane-spanning segment. Residues Thr87 to His110 are Extracellular-facing. The NPA motif lies at Asn92–Ala94. The chain crosses the membrane as a helical span at residues Trp111 to Leu131. Residues Gln132–Asp152 are Cytoplasmic-facing.

Belongs to the MIP/aquaporin (TC 1.A.8) family.

Its subcellular location is the membrane. This is an uncharacterized protein from Saccharomyces cerevisiae (strain RM11-1a) (Baker's yeast).